The primary structure comprises 1357 residues: DNA-directed RNA polymerase subunit beta (1357 aa).

The protein belongs to the RNA polymerase beta chain family. The RNAP catalytic core consists of 2 alpha, 1 beta, 1 beta' and 1 omega subunit. When a sigma factor is associated with the core the holoenzyme is formed, which can initiate transcription.

The catalysed reaction is RNA(n) + a ribonucleoside 5'-triphosphate = RNA(n+1) + diphosphate. Its function is as follows. DNA-dependent RNA polymerase catalyzes the transcription of DNA into RNA using the four ribonucleoside triphosphates as substrates. The sequence is that of DNA-directed RNA polymerase subunit beta from Pseudomonas putida (strain ATCC 700007 / DSM 6899 / JCM 31910 / BCRC 17059 / LMG 24140 / F1).